The primary structure comprises 182 residues: Probable peptidyl-prolyl cis-trans isomerase A (182 aa).

One can recognise a PPIase cyclophilin-type domain in the interval 13–181; that stretch reads QNATATLHTN…EPVVIDSITI (169 aa). The tract at residues 161–182 is disordered; sequence TTATDGNDRPTEPVVIDSITIS.

The protein belongs to the cyclophilin-type PPIase family.

Its subcellular location is the cytoplasm. The enzyme catalyses [protein]-peptidylproline (omega=180) = [protein]-peptidylproline (omega=0). Functionally, PPIases accelerate the folding of proteins. It catalyzes the cis-trans isomerization of proline imidic peptide bonds in oligopeptides. The sequence is that of Probable peptidyl-prolyl cis-trans isomerase A (ppiA) from Mycobacterium leprae (strain TN).